Reading from the N-terminus, the 954-residue chain is MMRLSSTLRRFRWAVFATWLLLLVPSIYLALNQSSNLTGGGFEVEGSQSLHVQRQLEEHFPDQGASPLALVAAPRADASYEDMNAAVVHLEKLAAEVPSVKIVPNPQQPAPQPDRPYVITLQLDFNNTGAVDVAKQLRQKVGIHGEEPGESQNGKVKFYVIGQGALGAAATQATKHDIAAAEKWNMPIVLIVLLAVFGSLAAAALPLVLGVCTVVVTMGLVYLLSMFTTMSVFVTSTVSMFGIAVAIDYSLFILMRFREELRAGRDQQDAIDAAMATSGLAVALSGLTVIASVTGIYLINTPVLVSMATGAILAVAVAVLTSTTLTPAVLATFGKAAAKRSSYLHWSRRAEAAQSRFWTRWTGAVMRRPWASAIAAAILLLVLAAPAFNMVLGNSMQRQFDPTHEIRGGVNAAADALGPGALGPIRVLVTFPGEGDASSQAATTTIEAVRQQMTKAPSVVSVQPPVVSDDNDSALLSAVLSVDPEDMAAREAIDWMRAELPGVAGQNATIDVGGPTALIKDFDDRVSATQPLVFVFVALIAFVMLLVSIRSVVLAFKGVLMTVLSVAAAYGSLVVVFQWGWLEQLGFPRISSLDSTIPPLVLAMTFGLSMDYEIFLLTRIRERFLQTNSTRDAVAYGVSTSARTITSAALIMIAVFIGFAFAGMPLVAQLGVACAVAIAVDATVVRLVLVPALMAMFDQWNWWLPRWLDKILPEVDFEKPLPKIEVTDLVIIPDNIAALGPSGSDLRTMVRTAARMKTLAPQTISVADPLAFSGCTRPTTRLSTQRAGRPKAHTPGLHPVTMWRGRLSVAVDALQTEADTEQAPVERRGPVETTNVQLPTGDRLQIPTGAETLRLAGYLIMCRNTTKDFEDFARLVDLMDSHTAALVLASMDRYYCGRDPSNRWVATQLVRRLADPQPSDEHDVRMSGPDAAEDWEKVRQRCLSVAVAMLEEAK.

A run of 12 helical transmembrane segments spans residues 11–31 (FRWA…YLAL), 188–208 (IVLI…LPLV), 214–234 (VVVT…SVFV), 235–255 (TSTV…FILM), 279–299 (GLAV…IYLI), 312–334 (ILAV…ATFG), 373–393 (AIAA…MVLG), 529–549 (TQPL…LVSI), 559–579 (VLMT…VFQW), 597–617 (IPPL…IFLL), 648–668 (AALI…PLVA), and 670–690 (LGVA…LVLV).

The protein resides in the cell inner membrane. Contributes to cell wall biosynthesis and biofilm formation. Transports the mycolic acid-containing lipids monomeromycolyl diacylglycerol (MMDAG) and mycolate ester wax (WE) to the bacterial surface. This chain is Mycolic acid-containing lipids exporter MmpL11, found in Mycolicibacterium smegmatis (strain ATCC 700084 / mc(2)155) (Mycobacterium smegmatis).